The chain runs to 648 residues: Shugoshin (648 aa).

Coiled-coil stretches lie at residues 95–122 (LMIK…RLSV) and 208–273 (DDRA…KDEA). 5 disordered regions span residues 188-239 (KVVG…RSSR), 262-334 (EADK…QEDA), 367-443 (VYRD…RPRR), 483-518 (TNRK…AAED), and 628-648 (HRAR…KVST). Composition is skewed to basic and acidic residues over residues 200 to 217 (VRGE…HQEA) and 262 to 273 (EADKSRSAKDEA). Positions 306 to 315 (ASGTLTQSNE) are enriched in polar residues. 2 stretches are compositionally biased toward basic and acidic residues: residues 424–440 (IVVD…DATR) and 490–509 (QREG…HEQD).

This sequence belongs to the shugoshin family.

Its subcellular location is the nucleus. The protein localises to the chromosome. The protein resides in the centromere. In terms of biological role, plays a central role in chromosome cohesion during cell division by preventing premature dissociation of cohesin complex from centromeres after prophase, when most of cohesin complex dissociates from chromosomes arms. May act by protecting RAD21 and or REC8 from cleavage by ESP1/separase. This Eremothecium gossypii (strain ATCC 10895 / CBS 109.51 / FGSC 9923 / NRRL Y-1056) (Yeast) protein is Shugoshin (SGO1).